Here is a 352-residue protein sequence, read N- to C-terminus: C-C chemokine receptor type 5 (352 aa).

Residues 1-30 (MDYQVSSPTYDIDYYTSEPCQKINVKQIAA) lie on the Extracellular side of the membrane. Y3 carries the post-translational modification Sulfotyrosine. S6 and S7 each carry an O-linked (GalNAc...) serine glycan. A sulfotyrosine mark is found at Y10, Y14, and Y15. Intrachain disulfides connect C20/C269 and C101/C178. Residues 31–58 (RLLPPLYSLVFIFGFVGNILVVLILINC) traverse the membrane as a helical segment. Over 59-68 (KRLKSMTDIY) the chain is Cytoplasmic. Residues 69-89 (LLNLAISDLLFLLTVPFWAHY) form a helical membrane-spanning segment. Residues 90–102 (AAAQWDFGNTMCQ) are Extracellular-facing. The helical transmembrane segment at 103-124 (LLTGLYFIGFFSGIFFIILLTI) threads the bilayer. The Cytoplasmic segment spans residues 125–141 (DRYLAIVHAVFALKART). A helical membrane pass occupies residues 142 to 166 (VTFGVVTSVITWVVAVFASLPGIIF). Over 167 to 198 (TRSQREGLHYTCSSHFPYSQYQFWKNFQTLKM) the chain is Extracellular. A helical membrane pass occupies residues 199 to 218 (VILGLVLPLLVMVICYSGIL). Residues 219–235 (KTLLRCRNEKKRHRAVR) lie on the Cytoplasmic side of the membrane. The helical transmembrane segment at 236-260 (LIFTIMIVYFLFWAPYNIVLLLNTF) threads the bilayer. At 261-277 (QEFFGLNNCSSSNRLDQ) the chain is on the extracellular side. A helical transmembrane segment spans residues 278–301 (AMQVTETLGMTHCCINPIIYAFVG). The Cytoplasmic segment spans residues 302 to 352 (EKFRNYLLVFFQKHIAKRFCKCCSIFQQEAPERASSVYTRSTGEQEISVGL). S-palmitoyl cysteine attachment occurs at residues C321, C323, and C324. Residues S336, S337, S342, and S349 each carry the phosphoserine; by BARK1 modification.

It belongs to the G-protein coupled receptor 1 family. In terms of assembly, interacts with PRAF2. Efficient ligand binding to CCL3/MIP-1alpha and CCL4/MIP-1beta requires sulfation, O-glycosylation and sialic acid modifications. Glycosylation on Ser-6 is required for efficient binding of CCL4. Interacts with GRK2. Interacts with ARRB1 and ARRB2. Interacts with CNIH4. Interacts with S100A4; this interaction stimulates T-lymphocyte chemotaxis. Post-translationally, sulfated on at least 2 of the N-terminal tyrosines. Sulfation is required for efficient binding of the chemokines, CCL3 and CCL4. In terms of processing, palmitoylation in the C-terminal is important for cell surface expression. Phosphorylation on serine residues in the C-terminal is stimulated by binding CC chemokines especially by APO-RANTES. Post-translationally, O-glycosylated, but not N-glycosylated. Ser-6 appears to be the major site even if Ser-7 may be also O-glycosylated. Also sialylated glycans present which contribute to chemokine binding. Thr-16 and Ser-17 may also be glycosylated and, if so, with small moieties such as a T-antigen.

The protein resides in the cell membrane. Its function is as follows. Receptor for a number of inflammatory CC-chemokines including CCL3/MIP-1-alpha, CCL4/MIP-1-beta and RANTES and subsequently transduces a signal by increasing the intracellular calcium ion level. May play a role in the control of granulocytic lineage proliferation or differentiation. Participates in T-lymphocyte migration to the infection site by acting as a chemotactic receptor. This chain is C-C chemokine receptor type 5 (CCR5), found in Macaca fascicularis (Crab-eating macaque).